The chain runs to 517 residues: Protein MGF 505-2R (517 aa).

Belongs to the asfivirus MGF 505 family.

Plays a role in virus cell tropism, and may be required for efficient virus replication in macrophages. The protein is Protein MGF 505-2R of African swine fever virus (isolate Warthog/Namibia/Wart80/1980) (ASFV).